Reading from the N-terminus, the 476-residue chain is Bifunctional protein HldE (476 aa).

Positions M1 to T318 are ribokinase. Position 195 to 198 (N195 to E198) interacts with ATP. D264 is an active-site residue. Residues M344–G476 are cytidylyltransferase.

The protein in the N-terminal section; belongs to the carbohydrate kinase PfkB family. It in the C-terminal section; belongs to the cytidylyltransferase family. Homodimer.

It catalyses the reaction D-glycero-beta-D-manno-heptose 7-phosphate + ATP = D-glycero-beta-D-manno-heptose 1,7-bisphosphate + ADP + H(+). It carries out the reaction D-glycero-beta-D-manno-heptose 1-phosphate + ATP + H(+) = ADP-D-glycero-beta-D-manno-heptose + diphosphate. The protein operates within nucleotide-sugar biosynthesis; ADP-L-glycero-beta-D-manno-heptose biosynthesis; ADP-L-glycero-beta-D-manno-heptose from D-glycero-beta-D-manno-heptose 7-phosphate: step 1/4. It participates in nucleotide-sugar biosynthesis; ADP-L-glycero-beta-D-manno-heptose biosynthesis; ADP-L-glycero-beta-D-manno-heptose from D-glycero-beta-D-manno-heptose 7-phosphate: step 3/4. Functionally, catalyzes the phosphorylation of D-glycero-D-manno-heptose 7-phosphate at the C-1 position to selectively form D-glycero-beta-D-manno-heptose-1,7-bisphosphate. In terms of biological role, catalyzes the ADP transfer from ATP to D-glycero-beta-D-manno-heptose 1-phosphate, yielding ADP-D-glycero-beta-D-manno-heptose. This chain is Bifunctional protein HldE, found in Yersinia pseudotuberculosis serotype O:1b (strain IP 31758).